The chain runs to 267 residues: 4-hydroxy-tetrahydrodipicolinate reductase (267 aa).

NAD(+) contacts are provided by residues 8 to 13 (GAAGRM) and Asp-34. Arg-35 lines the NADP(+) pocket. Residues 98–100 (GTT) and 122–125 (AANF) each bind NAD(+). His-155 serves as the catalytic Proton donor/acceptor. A (S)-2,3,4,5-tetrahydrodipicolinate-binding site is contributed by His-156. Residue Lys-159 is the Proton donor of the active site. 165–166 (GT) is a binding site for (S)-2,3,4,5-tetrahydrodipicolinate.

The protein belongs to the DapB family.

It is found in the cytoplasm. It catalyses the reaction (S)-2,3,4,5-tetrahydrodipicolinate + NAD(+) + H2O = (2S,4S)-4-hydroxy-2,3,4,5-tetrahydrodipicolinate + NADH + H(+). It carries out the reaction (S)-2,3,4,5-tetrahydrodipicolinate + NADP(+) + H2O = (2S,4S)-4-hydroxy-2,3,4,5-tetrahydrodipicolinate + NADPH + H(+). Its pathway is amino-acid biosynthesis; L-lysine biosynthesis via DAP pathway; (S)-tetrahydrodipicolinate from L-aspartate: step 4/4. Functionally, catalyzes the conversion of 4-hydroxy-tetrahydrodipicolinate (HTPA) to tetrahydrodipicolinate. This is 4-hydroxy-tetrahydrodipicolinate reductase from Pseudomonas putida (strain GB-1).